The primary structure comprises 227 residues: PKHD-type hydroxylase ACICU_00484 (227 aa).

Residues 78–178 enclose the Fe2OG dioxygenase domain; the sequence is DIIPPLFNRY…RIASFFWVQS (101 aa). 3 residues coordinate Fe cation: His96, Asp98, and His159. Arg169 provides a ligand contact to 2-oxoglutarate.

Fe(2+) is required as a cofactor. It depends on L-ascorbate as a cofactor.

In Acinetobacter baumannii (strain ACICU), this protein is PKHD-type hydroxylase ACICU_00484.